The sequence spans 172 residues: Putative phosphoesterase BCG9842_B4061 (172 aa).

His-34 acts as the Proton donor in catalysis. 2 short sequence motifs (HXTX) span residues 34 to 37 (HITL) and 115 to 118 (HLTI). Residue His-115 is the Proton acceptor of the active site.

It belongs to the 2H phosphoesterase superfamily. YjcG family.

This chain is Putative phosphoesterase BCG9842_B4061, found in Bacillus cereus (strain G9842).